A 184-amino-acid polypeptide reads, in one-letter code: MLFDKYDVNSVEVHDPGMVKYINVKSALNLHTGGRFSSYYAGKINMNVVERLINKLMRTEKWTGKKYSAYKITKDAFDIIADKTKQNPLQILINAIENAGPREEVTRLKYGGIAVPKSVDVSPSRRVDEALRNIATGATNASFKSKKSIVNCLADEIMLAAKNDASSFAISKKEEIERVAQSAR.

The protein belongs to the universal ribosomal protein uS7 family. As to quaternary structure, part of the 30S ribosomal subunit.

One of the primary rRNA binding proteins, it binds directly to 16S rRNA where it nucleates assembly of the head domain of the 30S subunit. Is located at the subunit interface close to the decoding center. This Thermoplasma volcanium (strain ATCC 51530 / DSM 4299 / JCM 9571 / NBRC 15438 / GSS1) protein is Small ribosomal subunit protein uS7.